A 368-amino-acid polypeptide reads, in one-letter code: Endophilin-A2 (368 aa).

A membrane-binding amphipathic helix region spans residues 1-21 (MSVAGLKKQFYKASQLVSEKV). The BAR domain occupies 18 to 249 (SEKVGGAEGT…LKRRVREASS (232 aa)). The tract at residues 60–87 (PNPASRAKLTMLNTVSKIRGQVKNPGYP) is required for dimerization upon membrane association. The stretch at 180 to 250 (DEELRQALEK…KRRVREASSR (71 aa)) forms a coiled coil. The interaction with ARC stretch occupies residues 218–254 (LVDAQLDYHRQAVQILEELADKLKRRVREASSRPKRE). The tract at residues 244–307 (VREASSRPKR…MPSKSMPPLD (64 aa)) is disordered. Residues 245-263 (REASSRPKREFKPRPREPF) show a composition bias toward basic and acidic residues. Phosphoserine occurs at positions 288 and 292. The 60-residue stretch at 306 to 365 (LDQPSCKALYDFEPENDGELGFREGDLITLTNQIDENWYEGMLHGQSGFFPLSYVQVLVP) folds into the SH3 domain. Y315 carries the post-translational modification Phosphotyrosine.

This sequence belongs to the endophilin family. As to quaternary structure, interacts with ARC, SYNJ1 and DNM1. Interacts with PDCD6IP. Interacts with BIN2.

The protein localises to the cytoplasm. It is found in the early endosome membrane. It localises to the cell projection. The protein resides in the podosome. Its function is as follows. Implicated in endocytosis. May recruit other proteins to membranes with high curvature. This chain is Endophilin-A2 (Sh3gl1), found in Mus musculus (Mouse).